The following is a 33-amino-acid chain: Cytochrome c oxidase subunit 5B liver, mitochondrial (33 aa).

This sequence belongs to the cytochrome c oxidase subunit 5B family. As to quaternary structure, component of the cytochrome c oxidase (complex IV, CIV), a multisubunit enzyme composed of 14 subunits. The complex is composed of a catalytic core of 3 subunits MT-CO1, MT-CO2 and MT-CO3, encoded in the mitochondrial DNA, and 11 supernumerary subunits COX4I, COX5A, COX5B, COX6A, COX6B, COX6C, COX7A, COX7B, COX7C, COX8 and NDUFA4, which are encoded in the nuclear genome. The complex exists as a monomer or a dimer and forms supercomplexes (SCs) in the inner mitochondrial membrane with NADH-ubiquinone oxidoreductase (complex I, CI) and ubiquinol-cytochrome c oxidoreductase (cytochrome b-c1 complex, complex III, CIII), resulting in different assemblies (supercomplex SCI(1)III(2)IV(1) and megacomplex MCI(2)III(2)IV(2)).

The protein resides in the mitochondrion inner membrane. It participates in energy metabolism; oxidative phosphorylation. Its function is as follows. Component of the cytochrome c oxidase, the last enzyme in the mitochondrial electron transport chain which drives oxidative phosphorylation. The respiratory chain contains 3 multisubunit complexes succinate dehydrogenase (complex II, CII), ubiquinol-cytochrome c oxidoreductase (cytochrome b-c1 complex, complex III, CIII) and cytochrome c oxidase (complex IV, CIV), that cooperate to transfer electrons derived from NADH and succinate to molecular oxygen, creating an electrochemical gradient over the inner membrane that drives transmembrane transport and the ATP synthase. Cytochrome c oxidase is the component of the respiratory chain that catalyzes the reduction of oxygen to water. Electrons originating from reduced cytochrome c in the intermembrane space (IMS) are transferred via the dinuclear copper A center (CU(A)) of subunit 2 and heme A of subunit 1 to the active site in subunit 1, a binuclear center (BNC) formed by heme A3 and copper B (CU(B)). The BNC reduces molecular oxygen to 2 water molecules using 4 electrons from cytochrome c in the IMS and 4 protons from the mitochondrial matrix. The chain is Cytochrome c oxidase subunit 5B liver, mitochondrial from Oncorhynchus mykiss (Rainbow trout).